Consider the following 274-residue polypeptide: 2,3,4,5-tetrahydropyridine-2,6-dicarboxylate N-succinyltransferase (274 aa).

The substrate site is built by arginine 104 and aspartate 141.

Belongs to the transferase hexapeptide repeat family. Homotrimer.

It is found in the cytoplasm. It catalyses the reaction (S)-2,3,4,5-tetrahydrodipicolinate + succinyl-CoA + H2O = (S)-2-succinylamino-6-oxoheptanedioate + CoA. It participates in amino-acid biosynthesis; L-lysine biosynthesis via DAP pathway; LL-2,6-diaminopimelate from (S)-tetrahydrodipicolinate (succinylase route): step 1/3. In Escherichia coli O157:H7, this protein is 2,3,4,5-tetrahydropyridine-2,6-dicarboxylate N-succinyltransferase (dapD).